We begin with the raw amino-acid sequence, 719 residues long: Disintegrin and metalloproteinase domain-containing protein 18 (719 aa).

An N-terminal signal peptide occupies residues 1-19 (MPLLFILAELAMLFARLDS). Residues 20–179 (EGICLHITVP…QDKNHSQLLP (160 aa)) constitute a propeptide that is removed on maturation. N-linked (GlcNAc...) asparagine glycosylation is found at asparagine 61, asparagine 75, asparagine 121, asparagine 152, asparagine 173, asparagine 244, and asparagine 331. The Extracellular portion of the chain corresponds to 173-683 (NHSQLLPQSL…TKRLSKNEDS (511 aa)). Residues 180–378 (QSLKLHIIVG…FDTQCLGDLS (199 aa)) form the Peptidase M12B domain. Disulfide bonds link cysteine 289/cysteine 373, cysteine 332/cysteine 357, and cysteine 334/cysteine 339. 2 N-linked (GlcNAc...) asparagine glycosylation sites follow: asparagine 356 and asparagine 405. One can recognise a Disintegrin domain in the interval 387 to 476 (QAVCGNGIME…HCVPDTFALN (90 aa)). Cysteine 447 and cysteine 468 are joined by a disulfide. 3 N-linked (GlcNAc...) asparagine glycosylation sites follow: asparagine 607, asparagine 614, and asparagine 621. In terms of domain architecture, EGF-like spans 616 to 650 (TGNDCNATKKCKGNGICNNFGNCQCFPDYRPPDCN). 3 disulfides stabilise this stretch: cysteine 620–cysteine 632, cysteine 626–cysteine 638, and cysteine 640–cysteine 649. The chain crosses the membrane as a helical span at residues 684–704 (WVILGFFIFLPFIVTFLVGIM). Topologically, residues 705-719 (KRNERKIVPQGEHKI) are cytoplasmic.

The prodomain and the metalloprotease-like domain are cleaved during the epididymal maturation of the spermatozoa. Expressed specifically in testis.

The protein localises to the membrane. Sperm surface membrane protein that may be involved in spermatogenesis and fertilization. This is a non catalytic metalloprotease-like protein. This Mus musculus (Mouse) protein is Disintegrin and metalloproteinase domain-containing protein 18 (Adam18).